Reading from the N-terminus, the 142-residue chain is Neuritin (142 aa).

Positions 1 to 27 (MGLKLNGRYISLILAVQIAYLVQAVRA) are cleaved as a signal peptide. A lipid anchor (GPI-anchor amidated glycine) is attached at Gly116. A propeptide spans 117–142 (AAGSLLPAFPVLLVSLSAALATWLSF) (removed in mature form).

The protein belongs to the neuritin family. Component of the outer core of AMPAR complex. AMPAR complex consists of an inner core made of 4 pore-forming GluA/GRIA proteins (GRIA1, GRIA2, GRIA3 and GRIA4) and 4 major auxiliary subunits arranged in a twofold symmetry. One of the two pairs of distinct binding sites is occupied either by CNIH2, CNIH3 or CACNG2, CACNG3. The other harbors CACNG2, CACNG3, CACNG4, CACNG8 or GSG1L. This inner core of AMPAR complex is complemented by outer core constituents binding directly to the GluA/GRIA proteins at sites distinct from the interaction sites of the inner core constituents. Outer core constituents include at least PRRT1, PRRT2, CKAMP44/SHISA9, FRRS1L and NRN1. The proteins of the inner and outer core serve as a platform for other, more peripherally associated AMPAR constituents. Alone or in combination, these auxiliary subunits control the gating and pharmacology of the AMPAR complex and profoundly impact their biogenesis and protein processing.

It is found in the cell membrane. The protein localises to the synapse. Functionally, promotes neurite outgrowth and especially branching of neuritic processes in primary hippocampal and cortical cells. In Homo sapiens (Human), this protein is Neuritin (NRN1).